A 135-amino-acid chain; its full sequence is Methylglyoxal synthase (135 aa).

Positions 1–135 (MPKRRRIALI…AQPDPKEIHA (135 aa)) constitute an MGS-like domain. Residues His-12, Lys-16, 38-41 (TGTT), and 58-59 (SG) each bind substrate. Asp-64 (proton donor/acceptor) is an active-site residue. Substrate is bound at residue His-91.

It belongs to the methylglyoxal synthase family.

The catalysed reaction is dihydroxyacetone phosphate = methylglyoxal + phosphate. In terms of biological role, catalyzes the formation of methylglyoxal from dihydroxyacetone phosphate. The chain is Methylglyoxal synthase from Ralstonia nicotianae (strain ATCC BAA-1114 / GMI1000) (Ralstonia solanacearum).